The chain runs to 431 residues: MLVLKTTDKEFSPRFQSLVSDRREATVDVSGTVRDILAHVKARGDAAVQEYTSRFDHYRPHSHHLSAAFIAEQAAKCSDEVKAALELAAERISSFHQKQLPQDIGYTDTAGVKLGLNWVALSQVGIYVPGGRASYPSSVLMNALPAKIAGVERIVMTVPMPHGEINPAVLAAAQVAGVTEIYSIGGAQAVGALAYGTETITPVDKIVGPGNAYVAEAKRQVFGTVGIDSIAGPSEILVVADRQNNPEWIAWDLLSQAEHDPSAQSILITDSESFAQQVIAAVEQILTTLPSQKVASSSWQNHGAVIIVRDLAESIPLLNQLAPEHVELCVDNPQLLASQIKCAGSLFLGRYTPEAIGDYLGGPNHVLPTSRSARFASGLSVYDFLKRITYLECNQAALQKIGQSAVTLAETEGLPAHAGSVAVRLQGLKDM.

Residues Tyr127, Gln188, and Asn211 each contribute to the NAD(+) site. Residues Ser234, Gln256, and His259 each coordinate substrate. Zn(2+)-binding residues include Gln256 and His259. Active-site proton acceptor residues include Glu324 and His325. Residues His325, Asp358, Glu412, and His417 each contribute to the substrate site. Residue Asp358 coordinates Zn(2+). His417 serves as a coordination point for Zn(2+).

The protein belongs to the histidinol dehydrogenase family. Requires Zn(2+) as cofactor.

It carries out the reaction L-histidinol + 2 NAD(+) + H2O = L-histidine + 2 NADH + 3 H(+). It participates in amino-acid biosynthesis; L-histidine biosynthesis; L-histidine from 5-phospho-alpha-D-ribose 1-diphosphate: step 9/9. Its function is as follows. Catalyzes the sequential NAD-dependent oxidations of L-histidinol to L-histidinaldehyde and then to L-histidine. This chain is Histidinol dehydrogenase 1 (hisD1), found in Nostoc sp. (strain PCC 7120 / SAG 25.82 / UTEX 2576).